Here is a 344-residue protein sequence, read N- to C-terminus: MITQRQKDILNLIVELFTKTHEPIGSKTLQNSIASSSATIRNDMAALEKLGLLEKAHTSSGRLPSQEGFRYFVEHSLNPDSLDEQDVYQVIKAFDFEAFRLGDLLQRASDVLANLTGYTALILDVEPKKQRLTTFDIVKLSNHDALAVLTLDEASPVTVQFAIPKNFLDSDLMTVAKIARERFLNQTVLDIHYRLRTELPQIIQKYFPRTDNVLDLFDHIFNPIFQEEVFISGKIKTLEFAGLNTYQFLENLQSVALEIRQSLPEDELHRVQVADSKEKSLADLTVISQKFLIPYRGFGILTVIGPVDLDYQRTISLINVISRVLAVKLGDFYRYLNSNHYEVH.

Belongs to the HrcA family.

Negative regulator of class I heat shock genes (grpE-dnaK-dnaJ and groELS operons). Prevents heat-shock induction of these operons. This Streptococcus mutans serotype c (strain ATCC 700610 / UA159) protein is Heat-inducible transcription repressor HrcA.